The following is a 490-amino-acid chain: Cytochrome P450 2C2 (490 aa).

Cysteine 435 is a binding site for heme.

Belongs to the cytochrome P450 family. Requires heme as cofactor.

Its subcellular location is the endoplasmic reticulum membrane. The protein localises to the microsome membrane. The enzyme catalyses an organic molecule + reduced [NADPH--hemoprotein reductase] + O2 = an alcohol + oxidized [NADPH--hemoprotein reductase] + H2O + H(+). Its function is as follows. Cytochromes P450 are a group of heme-thiolate monooxygenases. In liver microsomes, this enzyme is involved in an NADPH-dependent electron transport pathway. It oxidizes a variety of structurally unrelated compounds, including steroids, fatty acids, and xenobiotics. In the epoxidation of arachidonic acid it generates only 14,15- and 11,12-cis-epoxyeicosatrienoic acids. The sequence is that of Cytochrome P450 2C2 (CYP2C2) from Oryctolagus cuniculus (Rabbit).